The primary structure comprises 713 residues: Glycine--tRNA ligase beta subunit (713 aa).

The protein belongs to the class-II aminoacyl-tRNA synthetase family. Tetramer of two alpha and two beta subunits.

It localises to the cytoplasm. It carries out the reaction tRNA(Gly) + glycine + ATP = glycyl-tRNA(Gly) + AMP + diphosphate. The sequence is that of Glycine--tRNA ligase beta subunit from Leptothrix cholodnii (strain ATCC 51168 / LMG 8142 / SP-6) (Leptothrix discophora (strain SP-6)).